The chain runs to 96 residues: Citrate lyase acyl carrier protein (96 aa).

Ser-14 is subject to O-(phosphoribosyl dephospho-coenzyme A)serine.

Belongs to the CitD family. As to quaternary structure, oligomer with a subunit composition of (alpha,beta,gamma)6.

The protein localises to the cytoplasm. Functionally, covalent carrier of the coenzyme of citrate lyase. This is Citrate lyase acyl carrier protein from Pectobacterium atrosepticum (strain SCRI 1043 / ATCC BAA-672) (Erwinia carotovora subsp. atroseptica).